We begin with the raw amino-acid sequence, 205 residues long: Putative glutamine amidotransferase-like protein L716 (205 aa).

Residues 1–176 (MLLIIQNGYI…SNHIESYDYA (176 aa)) form the Glutamine amidotransferase type-1 domain. Active-site for GATase activity residues include C82, H155, and D157.

This chain is Putative glutamine amidotransferase-like protein L716, found in Acanthamoeba polyphaga mimivirus (APMV).